Consider the following 298-residue polypeptide: Cyanophycinase (298 aa).

Residues Ser155, Glu173, and His197 each act as charge relay system in the active site.

It belongs to the peptidase S51 family.

The enzyme catalyses [L-4-(L-arginin-2-N-yl)aspartate](n) + H2O = [L-4-(L-arginin-2-N-yl)aspartate](n-1) + L-4-(L-arginin-2-N-yl)aspartate. Exopeptidase that catalyzes the hydrolytic cleavage of multi-L-arginyl-poly-L-aspartic acid (cyanophycin; a water-insoluble reserve polymer) into aspartate-arginine dipeptides. This Nostoc sp. (strain PCC 7120 / SAG 25.82 / UTEX 2576) protein is Cyanophycinase (cphB).